We begin with the raw amino-acid sequence, 243 residues long: 1-(5-phosphoribosyl)-5-[(5-phosphoribosylamino)methylideneamino] imidazole-4-carboxamide isomerase (243 aa).

D8 acts as the Proton acceptor in catalysis. D129 functions as the Proton donor in the catalytic mechanism.

This sequence belongs to the HisA/HisF family.

The protein localises to the cytoplasm. It catalyses the reaction 1-(5-phospho-beta-D-ribosyl)-5-[(5-phospho-beta-D-ribosylamino)methylideneamino]imidazole-4-carboxamide = 5-[(5-phospho-1-deoxy-D-ribulos-1-ylimino)methylamino]-1-(5-phospho-beta-D-ribosyl)imidazole-4-carboxamide. The protein operates within amino-acid biosynthesis; L-histidine biosynthesis; L-histidine from 5-phospho-alpha-D-ribose 1-diphosphate: step 4/9. The protein is 1-(5-phosphoribosyl)-5-[(5-phosphoribosylamino)methylideneamino] imidazole-4-carboxamide isomerase of Syntrophotalea carbinolica (strain DSM 2380 / NBRC 103641 / GraBd1) (Pelobacter carbinolicus).